The primary structure comprises 146 residues: Small nuclear ribonucleoprotein Sm D1 (146 aa).

Residues 2 to 101 (KLVNFLKKLR…IRQIILPDSL (100 aa)) form the Sm domain. Positions 118–146 (RSGQIANDPSKKRRRDFGAPANKRPRRGL) are disordered. Residues 128–144 (KKRRRDFGAPANKRPRR) carry the Nuclear localization signal motif.

It belongs to the snRNP core protein family. Component of the Sm core complex, present in spliceosomal snRNP U1, U2, U4/U6 and U5. The core complex contains SMB1, SMD1, SMD2, SMD3, SME1, SMX3 and SMX2 (Sm proteins B, D1, D2, D3, E, F and G, respectively), and is probably a heptameric ring structure. Belongs to the CWC complex (or CEF1-associated complex), a spliceosome sub-complex reminiscent of a late-stage spliceosome composed of the U2, U5 and U6 snRNAs and at least BUD13, BUD31, BRR2, CDC40, CEF1, CLF1, CUS1, CWC2, CWC15, CWC21, CWC22, CWC23, CWC24, CWC25, CWC27, ECM2, HSH155, IST3, ISY1, LEA1, MSL1, NTC20, PRP8, PRP9, PRP11, PRP19, PRP21, PRP22, PRP45, PRP46, SLU7, SMB1, SMD1, SMD2, SMD3, SMX2, SMX3, SNT309, SNU114, SPP2, SYF1, SYF2, RSE1 and YJU2. Component of the U4/U6-U5 tri-snRNP complex composed of the U4, U6 and U5 snRNAs and at least PRP3, PRP4, PRP6, PRP8, PRP18, PRP31, PRP38, SNU13, SNU23, SNU66, SNU114, SPP381, SMB1, SMD1, SMD2, SMD3, SMX2, SMX3, LSM2, LSM3, LSM4, LSM5, LSM6, LSM7, LSM8, BRR2 and DIB1.

It is found in the nucleus. The protein resides in the cytoplasm. Its function is as follows. lays a role in pre-mRNA splicing as a core component of the spliceosomal U1, U2, U4 and U5 small nuclear ribonucleoproteins (snRNPs), the building blocks of the spliceosome. Also binds telomerase RNA and is required for its accumulation. In Saccharomyces cerevisiae (strain ATCC 204508 / S288c) (Baker's yeast), this protein is Small nuclear ribonucleoprotein Sm D1 (SMD1).